Here is a 155-residue protein sequence, read N- to C-terminus: Endoribonuclease YbeY (155 aa).

Zn(2+)-binding residues include histidine 114, histidine 118, and histidine 124.

Belongs to the endoribonuclease YbeY family. Zn(2+) is required as a cofactor.

The protein resides in the cytoplasm. Functionally, single strand-specific metallo-endoribonuclease involved in late-stage 70S ribosome quality control and in maturation of the 3' terminus of the 16S rRNA. The protein is Endoribonuclease YbeY of Escherichia coli O81 (strain ED1a).